Reading from the N-terminus, the 85-residue chain is Large ribosomal subunit protein bL27 (85 aa).

The segment at 1–20 (MAHKKGGGTTRNGRDSESKR) is disordered.

It belongs to the bacterial ribosomal protein bL27 family.

The protein is Large ribosomal subunit protein bL27 of Herminiimonas arsenicoxydans.